An 877-amino-acid polypeptide reads, in one-letter code: DNA repair protein rad16 (877 aa).

The residue at position 71 (Ser-71) is a Phosphoserine; by CK2. The tract at residues 440 to 490 (SKSIKKPEPSKEREASNTTSRKGVPPSKRRRVRGGNNATSRTTSDNTDAND) is disordered. Basic and acidic residues predominate over residues 444–454 (KKPEPSKEREA). The span at 475 to 490 (NNATSRTTSDNTDAND) shows a compositional bias: polar residues. One can recognise an ERCC4 domain in the interval 652-732 (RVIVDLREFR…IPVLLIEFEQ (81 aa)).

This sequence belongs to the XPF family. In terms of assembly, heterodimer composed of rad16 and swi10.

The protein localises to the nucleus. It is found in the cytoplasm. It localises to the cytoskeleton. Its subcellular location is the microtubule organizing center. The protein resides in the spindle pole body. In terms of biological role, endonuclease that specifically degrades single-stranded DNA and which is involved in nucleotide excision repair of DNA damaged with UV light, bulky adducts, or cross-linking agents. Required for double strand break-induced interchromosomal gene conversion. The sequence is that of DNA repair protein rad16 (rad16) from Schizosaccharomyces pombe (strain 972 / ATCC 24843) (Fission yeast).